A 320-amino-acid polypeptide reads, in one-letter code: Aspartate carbamoyltransferase catalytic subunit (320 aa).

Positions 70 and 71 each coordinate carbamoyl phosphate. L-aspartate is bound at residue K98. Carbamoyl phosphate is bound by residues R120, H149, and Q152. 2 residues coordinate L-aspartate: R182 and R237. The carbamoyl phosphate site is built by G278 and P279.

This sequence belongs to the aspartate/ornithine carbamoyltransferase superfamily. ATCase family. In terms of assembly, heterododecamer (2C3:3R2) of six catalytic PyrB chains organized as two trimers (C3), and six regulatory PyrI chains organized as three dimers (R2).

The enzyme catalyses carbamoyl phosphate + L-aspartate = N-carbamoyl-L-aspartate + phosphate + H(+). The protein operates within pyrimidine metabolism; UMP biosynthesis via de novo pathway; (S)-dihydroorotate from bicarbonate: step 2/3. Functionally, catalyzes the condensation of carbamoyl phosphate and aspartate to form carbamoyl aspartate and inorganic phosphate, the committed step in the de novo pyrimidine nucleotide biosynthesis pathway. This is Aspartate carbamoyltransferase catalytic subunit from Vesicomyosocius okutanii subsp. Calyptogena okutanii (strain HA).